A 55-amino-acid polypeptide reads, in one-letter code: Large ribosomal subunit protein bL33 (55 aa).

Belongs to the bacterial ribosomal protein bL33 family.

The protein is Large ribosomal subunit protein bL33 of Bradyrhizobium diazoefficiens (strain JCM 10833 / BCRC 13528 / IAM 13628 / NBRC 14792 / USDA 110).